Reading from the N-terminus, the 228-residue chain is Ribonuclease S-1 (228 aa).

A signal peptide spans 1–27 (MGVTGMTYMFTMVFSLIVLILSSSTVG). Gln36 is a binding site for RNA. A disulfide bond links Cys42 and Cys49. His60 is a binding site for RNA. His60 serves as the catalytic Proton donor. A disulfide bridge connects residues Cys75 and Cys119. A glycan (N-linked (GlcNAc...) asparagine) is linked at Asn87. Residue 98–99 (NV) participates in RNA binding. A glycan (N-linked (GlcNAc...) asparagine) is linked at Asn101. RNA contacts are provided by residues Phe108, 111–112 (KE), and 115–116 (KH). Residue Glu112 is part of the active site. The active-site Proton acceptor is the His116. 3 N-linked (GlcNAc...) asparagine glycosylation sites follow: Asn144, Asn157, and Asn175. Intrachain disulfides connect Cys183–Cys222 and Cys199–Cys210.

It belongs to the RNase T2 family. Post-translationally, N-linked core structure at Asn-87 and Asn-101 contains xylose and fucose or consists of disaccharide (GlcNAc-GlcNAc). N-linked core structure at Asn-144 contains xylose.

The enzyme catalyses a ribonucleotidyl-ribonucleotide-RNA + H2O = a 3'-end 3'-phospho-ribonucleotide-RNA + a 5'-end dephospho-ribonucleoside-RNA + H(+). Functionally, self-incompatibility (SI) is the inherited ability of a flowering plant to prevent self-fertilization by discriminating between self and non-self pollen during pollination. In many species, self-incompatibility is controlled by the single, multiallelic locus S. The chain is Ribonuclease S-1 from Pyrus pyrifolia (Chinese pear).